Here is a 243-residue protein sequence, read N- to C-terminus: 3-deoxy-manno-octulosonate cytidylyltransferase (243 aa).

The protein belongs to the KdsB family.

Its subcellular location is the cytoplasm. It catalyses the reaction 3-deoxy-alpha-D-manno-oct-2-ulosonate + CTP = CMP-3-deoxy-beta-D-manno-octulosonate + diphosphate. The protein operates within nucleotide-sugar biosynthesis; CMP-3-deoxy-D-manno-octulosonate biosynthesis; CMP-3-deoxy-D-manno-octulosonate from 3-deoxy-D-manno-octulosonate and CTP: step 1/1. Its pathway is bacterial outer membrane biogenesis; lipopolysaccharide biosynthesis. Functionally, activates KDO (a required 8-carbon sugar) for incorporation into bacterial lipopolysaccharide in Gram-negative bacteria. This chain is 3-deoxy-manno-octulosonate cytidylyltransferase, found in Helicobacter pylori (strain G27).